The sequence spans 193 residues: p53 apoptosis effector related to PMP-22 (193 aa).

The next 4 helical transmembrane spans lie at 12-32, 81-101, 110-130, and 151-171; these read RWILPLLLLSAIAFDIIALAG, LFCGFIILCICFILSFFALCG, VIGGLLALAAIFQIISLVIYP, and WAYGFGWAATIILIGCSFFFC.

Belongs to the TMEM47 family. As to expression, expressed in the stratified squamous skin epithelium of the skin and the tongue, but not in simple epithelia (at protein level). Expressed in the oral epithelium, tongue epithelium and skin (at protein level). More abundant in areas of lower flow stress in the inner curvature compared to the outer curvature regions of the aorta (at protein level). Expressed in luminal cells and myoepithelium cells of the mammary epithelium (at protein level). Expression increases during the early stages of pregnancy before decreasing before birth, expression continues to be weak during involution which mirrors decreased desmosome abundance and organization at these time points (at protein level). Expressed by epithelial cells at the mucosal surface in the proximal colon (at protein level). Expressed in apoptotic cells.

It localises to the cell junction. The protein resides in the desmosome. Its subcellular location is the cell membrane. It is found in the cytoplasm. Component of intercellular desmosome junctions. Plays a role in stratified epithelial integrity and cell-cell adhesion by promoting desmosome assembly. Thereby plays a role in barrier function of the skin against infection. Plays a role in mammary epithelial tissue homeostasis and remodeling during and after pregnancy, potentially via its involvement in desmosome cell-cell junctions. Required for tooth enamel development via facilitating desmosome-mediated ameloblast adhesion to the stratum intermedium during the transitional stage of amelogenesis. May also play a role in downstream transcriptional regulation of other genes involved in amelogenesis such as AMBN, ENAM, MMP20 and KLK4. Plays a role as an effector in the TP53-dependent apoptotic pathway. Positively regulates apoptosis in T-helper 17 (Th17) cell populations via caspase-dependent signaling. Promotes neutrophil transepithelial migration in response to chemoattractants such as hepoxilin A3 (HXA3), N-Formylmethionyl-leucyl-phenylalanine (fMLP) and CXCL8/IL-8. May act as a positive regulator of endothelial cell apoptosis in response to blood flow-derived shear stress. In Mus musculus (Mouse), this protein is p53 apoptosis effector related to PMP-22.